The following is a 522-amino-acid chain: MGKIKRRAITEHEKRALRHYFFQLQNRSGQQDLIEWFREKFGKDISQPSVSQILSSKYSYLDNTVEKPWDVKRNRPPKYPLLEAALFEWQVQQGDDATLSGETIKRAAAILWHKIPEYQDQPVPNFSNGWLEGFRKRHILHAINEQPTESVVLNNTEPPNDPLSRVYDVTRLTNINDIFTMQETGLFWKLVPNGTPEVEDIKGITRFKARITLTVCCNASGTERLPLWVIGYSQSPRVFRAANVKPEVMNFKWRSNGKASMTTAIMEEWLRWFDACMEGRKVILLIDSYTPHLRAVENIRNSGNDLRNTTVITLPSTSASISQPCSEGVIYALKACYRKHWVQYILEQNELGRNPYNTTNVLRAILWLVKAWTTDISPEIIENAFNLSGVLGLFNESAVTSRALDEMIHPLRELVSEFSVQAAMRIEDFISPSEENIVDSSEDIINQIASQYMDDRAFETDEEESTEFQITTKDAMKAIELLLNYEAQQPDGNPAITISLLNYQKLLEARGGNVNLSRLRST.

Residues 70-144 form the HTH CENPB-type domain; sequence DVKRNRPPKY…RKRHILHAIN (75 aa). Thr-460 is modified (phosphothreonine).

As to quaternary structure, interacts with mcm10.

It localises to the nucleus. Its function is as follows. Binds, preferentially, to the Maundrell ARS consensus sequence within ARS3002. In Schizosaccharomyces pombe (strain 972 / ATCC 24843) (Fission yeast), this protein is ARS-binding protein 1 (abp1).